Consider the following 212-residue polypeptide: ATP-dependent Clp protease proteolytic subunit (212 aa).

Residue Ser106 is the Nucleophile of the active site. His131 is an active-site residue.

The protein belongs to the peptidase S14 family. In terms of assembly, fourteen ClpP subunits assemble into 2 heptameric rings which stack back to back to give a disk-like structure with a central cavity, resembling the structure of eukaryotic proteasomes.

The protein resides in the cytoplasm. It carries out the reaction Hydrolysis of proteins to small peptides in the presence of ATP and magnesium. alpha-casein is the usual test substrate. In the absence of ATP, only oligopeptides shorter than five residues are hydrolyzed (such as succinyl-Leu-Tyr-|-NHMec, and Leu-Tyr-Leu-|-Tyr-Trp, in which cleavage of the -Tyr-|-Leu- and -Tyr-|-Trp bonds also occurs).. Functionally, cleaves peptides in various proteins in a process that requires ATP hydrolysis. Has a chymotrypsin-like activity. Plays a major role in the degradation of misfolded proteins. The sequence is that of ATP-dependent Clp protease proteolytic subunit from Rhodopseudomonas palustris (strain HaA2).